Here is a 336-residue protein sequence, read N- to C-terminus: Putative cysteine synthase (336 aa).

At Lys41 the chain carries N6-(pyridoxal phosphate)lysine. Pyridoxal 5'-phosphate is bound by residues Asn71, Gly179–Ser183, and Ser269.

Belongs to the cysteine synthase/cystathionine beta-synthase family. The cofactor is pyridoxal 5'-phosphate.

It catalyses the reaction O-acetyl-L-serine + hydrogen sulfide = L-cysteine + acetate. In terms of biological role, as it is highly similar to bacterial and plant cysteine synthases, it is possible that it catalyzes a related reaction. This Sinorhizobium fredii (strain NBRC 101917 / NGR234) protein is Putative cysteine synthase.